A 640-amino-acid polypeptide reads, in one-letter code: uncharacterized protein (640 aa).

The segment at 594–614 (QCSSDHCKPGSSETLPEATNE) is disordered.

This is an uncharacterized protein from Rattus norvegicus (Rat).